Here is a 417-residue protein sequence, read N- to C-terminus: Gamma-glutamyl phosphate reductase (417 aa).

The protein belongs to the gamma-glutamyl phosphate reductase family.

The protein resides in the cytoplasm. The enzyme catalyses L-glutamate 5-semialdehyde + phosphate + NADP(+) = L-glutamyl 5-phosphate + NADPH + H(+). It functions in the pathway amino-acid biosynthesis; L-proline biosynthesis; L-glutamate 5-semialdehyde from L-glutamate: step 2/2. Its function is as follows. Catalyzes the NADPH-dependent reduction of L-glutamate 5-phosphate into L-glutamate 5-semialdehyde and phosphate. The product spontaneously undergoes cyclization to form 1-pyrroline-5-carboxylate. The protein is Gamma-glutamyl phosphate reductase of Escherichia coli O45:K1 (strain S88 / ExPEC).